We begin with the raw amino-acid sequence, 311 residues long: Thioredoxin reductase (311 aa).

Residues 31 to 39 (FEKGMPGGQ) and 32 to 39 (EKGMPGGQ) contribute to the FAD site. Cys133 and Cys136 are oxidised to a cystine. 281–290 (DIRIFAPKQV) serves as a coordination point for FAD.

It belongs to the class-II pyridine nucleotide-disulfide oxidoreductase family. Homodimer. Requires FAD as cofactor.

It localises to the cytoplasm. It catalyses the reaction [thioredoxin]-dithiol + NADP(+) = [thioredoxin]-disulfide + NADPH + H(+). The protein is Thioredoxin reductase (trxB) of Helicobacter pylori (strain J99 / ATCC 700824) (Campylobacter pylori J99).